We begin with the raw amino-acid sequence, 166 residues long: Large ribosomal subunit protein uL10 (166 aa).

This sequence belongs to the universal ribosomal protein uL10 family. In terms of assembly, part of the ribosomal stalk of the 50S ribosomal subunit. The N-terminus interacts with L11 and the large rRNA to form the base of the stalk. The C-terminus forms an elongated spine to which L12 dimers bind in a sequential fashion forming a multimeric L10(L12)X complex.

Forms part of the ribosomal stalk, playing a central role in the interaction of the ribosome with GTP-bound translation factors. The chain is Large ribosomal subunit protein uL10 from Staphylococcus aureus (strain JH1).